The primary structure comprises 768 residues: Protein STRUBBELIG (768 aa).

A signal peptide spans 1–24; sequence MSFTRWEVFFGLSVLALTMPFSAG. The Extracellular segment spans residues 25-341; that stretch reads VTNLRDVSAI…GSGKFWSTQR (317 aa). Cys57 and Cys66 are disulfide-bonded. N-linked (GlcNAc...) asparagine glycosylation occurs at Asn70. LRR repeat units follow at residues 94-115, 116-139, 140-162, 164-186, 188-210, and 211-231; these read SIQVMDFSSNHISGTIPQALPS, SIRNLSLSSNRFTGNIPFTLSFLS, DLSELSLGSNLLSGEIPDYFQQL, KLTKLDLSSNILEGHLPSSMGDL, SLKILYLQDNKLTGTLDVIEDLF, and LTDLNVENNLFSGPIPPNLLK. The N-linked (GlcNAc...) asparagine glycan is linked to Asn119. The disordered stretch occupies residues 241 to 334; it reads PFNTSIITPP…ISPPSGSGSG (94 aa). An N-linked (GlcNAc...) asparagine glycan is attached at Asn243. Composition is skewed to pro residues over residues 248–283 and 291–301; these read TPPPPPVVDPPPATHRAPPVPRIPPVSGVPPAPFAP and QHPPPSPPLVW. The segment covering 315–334 has biased composition (polar residues); sequence NSVSGQPTLQISPPSGSGSG. The helical transmembrane segment at 342-362 threads the bilayer; the sequence is IILVVSSVAIIVLVSGLCVTL. Topologically, residues 363–768 are cytoplasmic; sequence WRCCRSKIYN…EIVQDLQHMI (406 aa). The tract at residues 385-477 is disordered; sequence PYFNKPPSQP…RAAHFPPGLN (93 aa). Residues 439 to 464 are compositionally biased toward polar residues; that stretch reads SYYNKDVNTPQKPLQQPPRQFQSNDT. The Protein kinase domain maps to 497 to 768; that stretch reads FSEENIIGEG…EIVQDLQHMI (272 aa). Residues 503–511 and Lys525 contribute to the ATP site; that span reads IGEGSIGNV.

The protein belongs to the protein kinase superfamily. Ser/Thr protein kinase family. In terms of assembly, interacts (via intra-cellular domain) with AN; this interaction is not required for correct subcellular localization and recycling of SUB. Binds to QKY and POQ at the plasma membrane. Binds to QKY at plasmodesmata (PD) in root epidermal cells to promote tissue morphogenesis. As to expression, expressed in leaves, stems, inflorescences, flower buds and developing root epidermis.

Its subcellular location is the cell membrane. The protein resides in the cell junction. It is found in the plasmodesma. With respect to regulation, regulated at the post-transcriptional level. Functionally, regulates the expression of transcription factors that define the cell fates. Acts in a non-cell-autonomous fashion, functions in a radial inside-out signaling process, and mediates cell morphogenesis and cell fate across clonally distinct cell layers in floral primordia, developing ovules, and root meristems. Seems to be required for the regulation of cell shape and the orientation of the mitotic division plane. Involved in root hair specification, in the formation of the outer integument and the shape of organs such as carpels and petals and is necessary for the shape and height of the stem. Non-functional SUB proteins are retained in the endoplasmic reticulum and degraded by endoplasmic reticulum-associated degradation (ERAD). Collaboratively with QKY and POQ, regulates cell growth anisotropy during gynoecium development, thus linking together cell-cell communication and cellular growth. Together with QKY, links RLK-dependent signal transduction and intercellular communication mediated by plasmodesmata (PD) to regulate tissue morphogenesis. The protein is Protein STRUBBELIG of Arabidopsis thaliana (Mouse-ear cress).